The following is a 49-amino-acid chain: Large ribosomal subunit protein bL33A (49 aa).

Residues 20–49 (KKNKRNNPDRVEFKKYCPRDKKSTLHRETK) form a disordered region. The segment covering 25-49 (NNPDRVEFKKYCPRDKKSTLHRETK) has biased composition (basic and acidic residues).

It belongs to the bacterial ribosomal protein bL33 family. In terms of assembly, part of the 50S ribosomal subunit. Interacts with VmlR.

The polypeptide is Large ribosomal subunit protein bL33A (rpmGA) (Bacillus subtilis (strain 168)).